Consider the following 31-residue polypeptide: Nemertide alpha-6 (31 aa).

Intrachain disulfides connect Cys2–Cys16, Cys9–Cys20, and Cys15–Cys26. Residues Pro28 and Pro29 each carry the 4-hydroxyproline modification.

Belongs to the nemertide family. Confined to the epidermis and to the mucus layer.

Its subcellular location is the secreted. In terms of biological role, highly potent toxin against both insect and some mammalian sodium channels (Nav). It potently inhibits inactivation of insect sodium channels of B.germanica (BgNav1) (EC(50)=2.6 nM) and also delays the inactivation of mammalian Nav with potent activity on Nav1.1/SCN1A (hNav1.1/SCN1A; EC(50)=7.9 nM, rNav1.2/SCN2A; EC(50)=24.3 nM, rNav1.3/SCN3A; EC(50)=105.6 nM, rNav1.4/SCN4A; EC(50)=46.4 nM, hNav1.5/SCN5A; EC(50)=215.2 nM, mNav1.6/SCN8A; EC(50)=36.3 nM, hNav1.9/SCN9A; EC(50)=97.2 nM). 1 uM is enough to completely inhibits the inactivation, resulting in sustained non-inactivating currents. In addition, the toxin significantly enhances the recovery from inactivation, and the open state is not required for the toxin to interact with the channel. In vivo, injection into brine shrimp (Artemia salina) stops movement or causes death after 24 hours (EC(50)=2.8 uM). The protein is Nemertide alpha-6 of Lineus sanguineus (Ribbon worm).